Reading from the N-terminus, the 449-residue chain is 1H-pyrrole-2-carbonyl-[peptidyl-carrier protein] chlorinase (449 aa).

Alanine 16, glutamate 35, arginine 41, histidine 43, valine 44, serine 47, arginine 123, isoleucine 147, and aspartate 316 together coordinate FAD. 2 residues coordinate chloride: serine 327 and glycine 328. Valine 329 contributes to the FAD binding site.

Belongs to the flavin-dependent halogenase family. Homodimer.

The enzyme catalyses (1H-pyrrole-2-carbonyl)-[peptidyl-carrier protein] + 2 FADH2 + 2 chloride + 2 O2 = (4,5-dichloro-1H-pyrrole-2-carbonyl)-[peptidyl-carrier protein] + 2 FAD + 4 H2O. It catalyses the reaction (1H-pyrrole-2-carbonyl)-[peptidyl-carrier protein] + FADH2 + chloride + O2 = (5-chloro-1H-pyrrole-2-carbonyl)-[peptidyl-carrier protein] + FAD + 2 H2O. It carries out the reaction (5-chloro-1H-pyrrole-2-carbonyl)-[peptidyl-carrier protein] + FADH2 + chloride + O2 = (4,5-dichloro-1H-pyrrole-2-carbonyl)-[peptidyl-carrier protein] + FAD + 2 H2O. Its pathway is antibiotic biosynthesis. Its function is as follows. Involved in the biosynthesis of the antibiotic pyoluteorin. Catalyzes the dichlorination of the pyrrole ring of pyrrolyl-S-PltL, generating the 5-chloropyrrolyl-S-PltL intermediate and then the 4,5-dichloropyrrolyl-S-PltL product. The chain is 1H-pyrrole-2-carbonyl-[peptidyl-carrier protein] chlorinase from Pseudomonas fluorescens (strain ATCC BAA-477 / NRRL B-23932 / Pf-5).